The chain runs to 353 residues: Chemerin-like receptor 2 (353 aa).

Residues Met1 to Ser41 are Extracellular-facing. N-linked (GlcNAc...) asparagine glycosylation is present at Asn14. The chain crosses the membrane as a helical span at residues Leu42–Phe62. At Met63–Thr73 the chain is on the cytoplasmic side. Residues Leu74–Ile94 traverse the membrane as a helical segment. The Extracellular segment spans residues Ser95–Leu112. The cysteines at positions 110 and 187 are disulfide-linked. The chain crosses the membrane as a helical span at residues Asn113 to Leu133. The Cytoplasmic segment spans residues Asp134 to Ser154. The helical transmembrane segment at Leu155–Phe175 threads the bilayer. Over Arg176–Leu210 the chain is Extracellular. A helical membrane pass occupies residues Phe211–Thr231. Over Lys232–Leu247 the chain is Cytoplasmic. A helical transmembrane segment spans residues Ser248–Leu268. Topologically, residues Ser269–Leu286 are extracellular. The chain crosses the membrane as a helical span at residues Ser287 to Lys307. The Cytoplasmic portion of the chain corresponds to Lys308 to Gln353.

The protein belongs to the chemokine-like receptor (CMKLR) family.

It is found in the cell membrane. Receptor for chemoattractant adipokine chemerin/RARRES2 suggesting a role for this receptor in the regulation of inflammation and energy homesotasis. Signals mainly via beta-arrestin pathway. Binding of RARRES2 activates weakly G proteins, calcium mobilization and MAPK1/MAPK3 (ERK1/2) phosphorylation too. Acts also as a receptor for TAFA1, mediates its effects on neuronal stem-cell proliferation and differentiation via the activation of ROCK/ERK and ROCK/STAT3 signaling pathway. In Rattus norvegicus (Rat), this protein is Chemerin-like receptor 2 (Cmklr2).